We begin with the raw amino-acid sequence, 108 residues long: Small ribosomal subunit protein bS16 (108 aa).

The disordered stretch occupies residues 82–108 (ESKFSKNTQTENKKPVSKKTTKKSKDN). The segment covering 96-108 (PVSKKTTKKSKDN) has biased composition (basic residues).

Belongs to the bacterial ribosomal protein bS16 family.

The polypeptide is Small ribosomal subunit protein bS16 (Mycoplasma mycoides subsp. mycoides SC (strain CCUG 32753 / NCTC 10114 / PG1)).